The chain runs to 109 residues: Spermidine export protein MdtI (109 aa).

Transmembrane regions (helical) follow at residues 6-26, 36-56, 64-84, and 88-108; these read FYPI…NILL, WLGI…AQAV, AYAL…WILF, and LNYK…MIKL.

Belongs to the drug/metabolite transporter (DMT) superfamily. Small multidrug resistance (SMR) (TC 2.A.7.1) family. MdtI subfamily. In terms of assembly, forms a complex with MdtJ.

It is found in the cell inner membrane. Its function is as follows. Catalyzes the excretion of spermidine. This Yersinia pseudotuberculosis serotype O:1b (strain IP 31758) protein is Spermidine export protein MdtI.